The sequence spans 503 residues: Arabinose import ATP-binding protein AraG 1 (503 aa).

ABC transporter domains follow at residues 5-240 (LRFD…MVGR) and 251-497 (RALG…LPQT). 37 to 44 (GENGAGKS) lines the ATP pocket.

This sequence belongs to the ABC transporter superfamily. Arabinose importer (TC 3.A.1.2.2) family. In terms of assembly, the complex is composed of two ATP-binding proteins (AraG), two transmembrane proteins (AraH) and a solute-binding protein (AraF).

It is found in the cell inner membrane. It catalyses the reaction L-arabinose(out) + ATP + H2O = L-arabinose(in) + ADP + phosphate + H(+). Its function is as follows. Part of the ABC transporter complex AraFGH involved in arabinose import. Responsible for energy coupling to the transport system. The chain is Arabinose import ATP-binding protein AraG 1 from Burkholderia lata (strain ATCC 17760 / DSM 23089 / LMG 22485 / NCIMB 9086 / R18194 / 383).